The sequence spans 163 residues: Nucleotide-binding protein LA_3406 (163 aa).

The protein belongs to the YajQ family.

Nucleotide-binding protein. This Leptospira interrogans serogroup Icterohaemorrhagiae serovar Lai (strain 56601) protein is Nucleotide-binding protein LA_3406.